The primary structure comprises 331 residues: MPTNSNHQHHLQHQLNENGSIISGHGLVLSHQLPPLQANPNPNHHHVATSAGLPSRMGGSMAERARQANIPPLAGPLKCPRCDSSNTKFCYYNNYNLTQPRHFCKGCRRYWTQGGALRNVPVGGGCRRNNKKGKNGNLKSSSSSSKQSSSVNAQSPSSGQLRTNHQFPFSPTLYNLTQLGGIGLNLAATNGNNQAHQIGSSLMMSDLGFLHGRNTSTPMTGNIHENNNNNNNENNLMASVGSLSPFALFDPTTGLYAFQNDGNIGNNVGISGSSTSMVDSRVYQTPPVKMEEQPNLANLSRPVSGLTSPGNQTNQYFWPGSDFSGPSNDLL.

A Dof-type zinc finger spans residues 77 to 131 (LKCPRCDSSNTKFCYYNNYNLTQPRHFCKGCRRYWTQGGALRNVPVGGGCRRNNK). Positions 79, 82, 104, and 107 each coordinate Zn(2+). 2 disordered regions span residues 121–166 (PVGG…TNHQ) and 291–331 (EEQP…NDLL). Residues 135-160 (NGNLKSSSSSSKQSSSVNAQSPSSGQ) are compositionally biased toward low complexity. Over residues 305 to 316 (GLTSPGNQTNQY) the composition is skewed to polar residues.

As to quaternary structure, interacts with OBF4. As to expression, expressed in the vasculature (mainly in the phloem and associated cell files) of cotyledons, leaves, roots, flower stalks and petals. The PEAR proteins (e.g. DOF2.4, DOF5.1, DOF3.2, DOF1.1, DOF5.6 and DOF5.3) form a short-range concentration gradient that peaks at protophloem sieve elements (PSE).

It is found in the nucleus. Functionally, transcription factor that binds specifically to a 5'-AA[AG]G-3' consensus core sequence. Enhances the DNA binding of OBF transcription factors to OCS elements. Involved in the regulation of root development. The PEAR proteins (e.g. DOF2.4, DOF5.1, DOF3.2, DOF1.1, DOF5.6 and DOF5.3) activate gene expression that promotes radial growth of protophloem sieve elements. Element of a regulatory network controlling indole glucosinolates (IGS) biosynthesis, probably by inducing the expression of accurate genes (e.g. CYP83B1). Promotes apical dominance. The sequence is that of Dof zinc finger protein DOF1.1 from Arabidopsis thaliana (Mouse-ear cress).